We begin with the raw amino-acid sequence, 1101 residues long: Cytospin-A (1101 aa).

2 disordered regions span residues 1–170 (MRKA…NQIS) and 280–366 (SDCG…SGNA). Composition is skewed to polar residues over residues 29 to 48 (ESSA…LSKA) and 64 to 86 (ASNS…TAMS). Positions 93–110 (RSSAGSSSNTKRSGSSGA) are enriched in low complexity. 2 stretches are compositionally biased toward basic and acidic residues: residues 114–125 (GSSRERLRERSR) and 151–165 (GRTD…KSKS). Residues 162–254 (KSKSDNQISD…LKDRLNALGF (93 aa)) are a coiled coil. Low complexity predominate over residues 333 to 355 (LTSSDDALDAPSSSSESEGLPST). Coiled-coil stretches lie at residues 373 to 427 (CLTE…MDSL) and 492 to 785 (QHLS…RGRV). The tract at residues 923–978 (SISVSRRSSEELKRDISVPDGSSAPSLMVMTSPSPQLSLSSSSPTASVTPTARSRI) is disordered. Residues 929-939 (RSSEELKRDIS) are compositionally biased toward basic and acidic residues. Residues 953-975 (TSPSPQLSLSSSSPTASVTPTAR) show a composition bias toward low complexity. In terms of domain architecture, Calponin-homology (CH) spans 995-1100 (GSKRNALLKW…YVTSIYKYFE (106 aa)).

It belongs to the cytospin-A family. In terms of assembly, may interact with both microtubules and actin cytoskeleton.

Its subcellular location is the cytoplasm. The protein resides in the cytoskeleton. It is found in the spindle. The protein localises to the cell junction. It localises to the gap junction. Functionally, involved in cytokinesis and spindle organization. May play a role in actin cytoskeleton organization and microtubule stabilization and hence required for proper cell adhesion and migration. This is Cytospin-A (specc1l) from Xenopus tropicalis (Western clawed frog).